A 448-amino-acid chain; its full sequence is MASFRSSLLSALCAYGMMVMPAYAIDPNHPKLHHHKYSERLKKRHTEDSYLSSSSTLESSKTFAQEPRRHVLTPIRNVLADRPCEEGLSISKLFNSIEKETNSQISVDFTILPQWFYPKKGLLKAVDEKQPTWQFYVSPNVSWQLYNSPTAGVGSIDFSYTLVRYWRNNAQNANNAIGIAGGINDYSTRTNTLSQLTFSQTFPENILTISFGQYSLYSIDGTLYDNDQQSGFLSYALSQNASATYSSGSVGAYLQFTPTPSINIQAGFQDAYNVSGSSFDLYNLTRNRYNFYGYVSWAPQSSLGSGQYSALVYSTRKVPEQPVQTTGWSLNFGQHLGEKLYVFGRWNGATGTVTNLNRSYVLGLASANPINRNPQDLLGAACSMSKVNPKVITEKKIRKYETVIETFATIGFGPHISLTPDLQIYIHPARRPDKRAAKVYGVRANFST.

A signal peptide spans 1-24 (MASFRSSLLSALCAYGMMVMPAYA).

Belongs to the OprB family.

The protein resides in the cell outer membrane. Facilitates L-arginine uptake, as part of the AaxABC system. The arginine uptake by the bacterium in the macrophage may be a virulence factor against the host innate immune response. The polypeptide is Porin AaxA (aaxA) (Chlamydia abortus (strain DSM 27085 / S26/3) (Chlamydophila abortus)).